Reading from the N-terminus, the 380-residue chain is Cytochrome b (380 aa).

Transmembrane regions (helical) follow at residues 34-54, 78-99, 114-134, and 179-199; these read FGSL…LLAM, WLIR…YLHI, WNTG…GYVL, and FFAL…IHLT. Residues H84 and H98 each coordinate heme b. Heme b is bound by residues H183 and H197. H202 serves as a coordination point for a ubiquinone. 4 helical membrane passes run 227–247, 289–309, 321–341, and 348–368; these read LKDI…ALFS, LGGV…PLLH, LSQL…WIGS, and FIII…VLFP.

This sequence belongs to the cytochrome b family. The cytochrome bc1 complex contains 11 subunits: 3 respiratory subunits (MT-CYB, CYC1 and UQCRFS1), 2 core proteins (UQCRC1 and UQCRC2) and 6 low-molecular weight proteins (UQCRH/QCR6, UQCRB/QCR7, UQCRQ/QCR8, UQCR10/QCR9, UQCR11/QCR10 and a cleavage product of UQCRFS1). This cytochrome bc1 complex then forms a dimer. Requires heme b as cofactor.

It localises to the mitochondrion inner membrane. Functionally, component of the ubiquinol-cytochrome c reductase complex (complex III or cytochrome b-c1 complex) that is part of the mitochondrial respiratory chain. The b-c1 complex mediates electron transfer from ubiquinol to cytochrome c. Contributes to the generation of a proton gradient across the mitochondrial membrane that is then used for ATP synthesis. The sequence is that of Cytochrome b (MT-CYB) from Oceanodroma melania (Black storm-petrel).